Consider the following 244-residue polypeptide: SURF1-like protein (244 aa).

2 helical membrane passes run 7–23 (ILTT…WQLS) and 201–219 (YAIT…YVIY).

It belongs to the SURF1 family.

Its subcellular location is the cell membrane. This chain is SURF1-like protein, found in Rickettsia prowazekii (strain Madrid E).